The sequence spans 346 residues: Threonylcarbamoyl-AMP synthase (346 aa).

The region spanning 18–205 (DPQIAQAAAL…IPVLLRPGGI (188 aa)) is the YrdC-like domain. L-threonine is bound at residue threonine 40. The ATP site is built by arginine 63 and asparagine 67. Histidine 72 is a binding site for L-threonine. ATP is bound at residue threonine 123. L-threonine is bound by residues arginine 127 and alanine 147. Serine 149 and serine 157 together coordinate ATP. Residue serine 187 coordinates L-threonine. Arginine 201 and tyrosine 240 together coordinate ATP.

This sequence belongs to the SUA5 family.

It is found in the cytoplasm. It carries out the reaction L-threonine + hydrogencarbonate + ATP = L-threonylcarbamoyladenylate + diphosphate + H2O. In terms of biological role, required for the formation of a threonylcarbamoyl group on adenosine at position 37 (t(6)A37) in tRNAs that read codons beginning with adenine. Catalyzes the conversion of L-threonine, HCO(3)(-)/CO(2) and ATP to give threonylcarbamoyl-AMP (TC-AMP) as the acyladenylate intermediate, with the release of diphosphate. Is also able to catalyze the reverse reaction in vitro, i.e. the formation of ATP from TC-AMP and PPi. The sequence is that of Threonylcarbamoyl-AMP synthase (ywlC) from Bacillus subtilis (strain 168).